Consider the following 299-residue polypeptide: Heat stress transcription factor B-2a (299 aa).

The DNA-binding element occupies 21 to 115 (PTPFLTKTFN…LLREIQRRKI (95 aa)). Residues 119–157 (HQTVVAPSSEQRNQTMVVSPSNSGEDNNNNQVMSSSPSS) form a disordered region. A hydrophobic repeat HR-A/B region spans residues 166–211 (TGNGGLSVELLEENEKLRSQNIQLNRELTQMKSICDNIYSLMSNYV). Residues 261-264 (KRTR) carry the Nuclear localization signal motif.

This sequence belongs to the HSF family. Class B subfamily. As to quaternary structure, homotrimer. In terms of processing, exhibits temperature-dependent phosphorylation.

It localises to the nucleus. Its function is as follows. Transcriptional regulator that specifically binds DNA sequence 5'-AGAAnnTTCT-3' known as heat shock promoter elements (HSE). The chain is Heat stress transcription factor B-2a (HSFB2A) from Arabidopsis thaliana (Mouse-ear cress).